A 1408-amino-acid chain; its full sequence is DNA-directed RNA polymerase subunit beta' (1408 aa).

Residues cysteine 70, cysteine 72, cysteine 85, and cysteine 88 each contribute to the Zn(2+) site. Mg(2+) is bound by residues aspartate 460, aspartate 462, and aspartate 464. Zn(2+) is bound by residues cysteine 814, cysteine 888, cysteine 895, and cysteine 898.

This sequence belongs to the RNA polymerase beta' chain family. The RNAP catalytic core consists of 2 alpha, 1 beta, 1 beta' and 1 omega subunit. When a sigma factor is associated with the core the holoenzyme is formed, which can initiate transcription. Mg(2+) is required as a cofactor. It depends on Zn(2+) as a cofactor.

The catalysed reaction is RNA(n) + a ribonucleoside 5'-triphosphate = RNA(n+1) + diphosphate. In terms of biological role, DNA-dependent RNA polymerase catalyzes the transcription of DNA into RNA using the four ribonucleoside triphosphates as substrates. In Shewanella frigidimarina (strain NCIMB 400), this protein is DNA-directed RNA polymerase subunit beta'.